The primary structure comprises 61 residues: Conotoxin TxMRCL-04 (61 aa).

An N-terminal signal peptide occupies residues 1–22; that stretch reads MRCLPVFVILLLLIASTPSVDA. Residues 23–46 constitute a propeptide that is removed on maturation; sequence QLKTKDDMSLASFHDNVKRILQIR.

The protein belongs to the conotoxin T superfamily. In terms of processing, contains 2 disulfide bonds that can be either 'C1-C3, C2-C4' or 'C1-C4, C2-C3', since these disulfide connectivities have been observed for conotoxins with cysteine framework V (for examples, see AC P0DQQ7 and AC P81755). Expressed by the venom duct.

The protein localises to the secreted. In Conus textile (Cloth-of-gold cone), this protein is Conotoxin TxMRCL-04.